A 388-amino-acid chain; its full sequence is Chorismate synthase (388 aa).

2 residues coordinate NADP(+): R40 and R46. FMN-binding positions include R131 to S133, N252 to A253, G296, K311 to T315, and R337.

This sequence belongs to the chorismate synthase family. In terms of assembly, homotetramer. FMNH2 is required as a cofactor.

It carries out the reaction 5-O-(1-carboxyvinyl)-3-phosphoshikimate = chorismate + phosphate. It participates in metabolic intermediate biosynthesis; chorismate biosynthesis; chorismate from D-erythrose 4-phosphate and phosphoenolpyruvate: step 7/7. In terms of biological role, catalyzes the anti-1,4-elimination of the C-3 phosphate and the C-6 proR hydrogen from 5-enolpyruvylshikimate-3-phosphate (EPSP) to yield chorismate, which is the branch point compound that serves as the starting substrate for the three terminal pathways of aromatic amino acid biosynthesis. This reaction introduces a second double bond into the aromatic ring system. The chain is Chorismate synthase from Limosilactobacillus fermentum (strain NBRC 3956 / LMG 18251) (Lactobacillus fermentum).